The primary structure comprises 519 residues: MELFLDPSTWAGLLTLIILEIVLGIDNLVFVAILSEKLPPCKQDKARLIGLSFALFMRLGLLALMSWMVTLTSEIISNKYFSFSGRDLILLFGGLFLLFKATIELHERLDNDIQKNENNKHYAGFWTIVIQIVILDSIFSLDAIITAVGTINNLPIMMIAVVIAMVLMLIASKPLTKFINLHQTVVVLCLSFLLMIGCNLVSEALGFYVPKGYLYAAIGFSIIIEIFNQIARRNFMLHQSRRPMRQRAAEAILRLMIGDQFRNTTTNISTKNKDKEKIRNRTTDTESFKEEERYMINGVLTLAARSIRSIMTPRNEISWVNIYQPKNKIRSQLLDTPHSLFPVCKGQLDEVIGIVRAKELLVALERTINIIDFSSTTLPIIIPDTLDPINLLGVLRRAKGSLVIVTNEFGAVQGLITPLDVLEAIAGEFPDADETPDIIFEKDSWLVKGGTDLHSLQQCLNITNLIKQENSYASLAGLLIAQKGQLPLPGETIVIPPLRFYILEATQYRINLVRITKQH.

The next 7 helical transmembrane spans lie at 13–35 (LLTLIILEIVLGIDNLVFVAILS), 48–70 (LIGLSFALFMRLGLLALMSWMVT), 80–102 (YFSFSGRDLILLFGGLFLLFKAT), 123–145 (AGFWTIVIQIVILDSIFSLDAII), 150–172 (TINNLPIMMIAVVIAMVLMLIAS), 185–207 (VVVLCLSFLLMIGCNLVSEALGF), and 212–231 (GYLYAAIGFSIIIEIFNQIA). CBS domains follow at residues 311–373 (MTPR…IIDF) and 374–434 (SSTT…DADE).

Belongs to the UPF0053 family.

Its subcellular location is the cell membrane. The chain is UPF0053 protein bbp_300 from Buchnera aphidicola subsp. Baizongia pistaciae (strain Bp).